Here is a 98-residue protein sequence, read N- to C-terminus: DNA-binding protein HU (98 aa).

This sequence belongs to the bacterial histone-like protein family. In terms of assembly, homodimer.

Histone-like DNA-binding protein which is capable of wrapping DNA to stabilize it, and thus to prevent its denaturation under extreme environmental conditions. The sequence is that of DNA-binding protein HU (hup) from Campylobacter jejuni subsp. jejuni serotype O:2 (strain ATCC 700819 / NCTC 11168).